A 494-amino-acid chain; its full sequence is UPF0371 protein M28_Spy1076 (494 aa).

This sequence belongs to the UPF0371 family.

The polypeptide is UPF0371 protein M28_Spy1076 (Streptococcus pyogenes serotype M28 (strain MGAS6180)).